A 715-amino-acid chain; its full sequence is Palmitoyltransferase ZDHHC5 (715 aa).

Residues 1–13 lie on the Cytoplasmic side of the membrane; that stretch reads MPAESGKRFKPSK. A helical membrane pass occupies residues 14–34; that stretch reads YVPVSAAAIFLVGATTLFFAF. Topologically, residues 35–52 are extracellular; sequence TCPGLSLDVSPAVPIYNA. Residues 53–73 form a helical membrane-spanning segment; sequence IMFLFVLANFSMATFMDPGIF. The Cytoplasmic portion of the chain corresponds to 74 to 148; that stretch reads PRAEEDEDKE…NCIGRRNYRY (75 aa). Position 91 is a phosphotyrosine (tyrosine 91). The DHHC domain maps to 104–154; sequence KWCATCRFYRPPRCSHCSVCDNCVEEFDHHCPWVNNCIGRRNYRYFFLFLL. The S-palmitoyl cysteine intermediate role is filled by cysteine 134. The helical transmembrane segment at 149–169 threads the bilayer; it reads FFLFLLSLTAHIMGVFGFGLL. Residues 170–191 are Extracellular-facing; the sequence is YVLCHIEELSGVRTAVTMAVMC. The helical transmembrane segment at 192-212 threads the bilayer; sequence VAGLFFIPVAGLTGFHVVLVA. Over 213–715 the chain is Cytoplasmic; the sequence is RGRTTNEQVT…VGGTTYEISV (503 aa). A Phosphoserine modification is found at serine 247. The disordered stretch occupies residues 289–715; that stretch reads GELRRTKSKG…VGGTTYEISV (427 aa). Threonine 294 carries the phosphothreonine modification. Serine 296 and serine 299 each carry phosphoserine. Threonine 303 bears the Phosphothreonine mark. Serine 345 carries the phosphoserine modification. Phosphothreonine is present on residues threonine 348 and threonine 350. Residues 359–373 show a composition bias toward low complexity; the sequence is SSSSTSAAMPHSSSA. Residues serine 380, serine 398, serine 406, and serine 409 each carry the phosphoserine modification. Residue threonine 411 is modified to Phosphothreonine. Phosphoserine is present on residues serine 415, serine 425, serine 429, and serine 432. Residues 422-432 show a composition bias toward low complexity; that stretch reads SSGSRSSSLKS. Threonine 436 carries the phosphothreonine modification. The span at 442–478 shows a compositional bias: polar residues; sequence QLQSIRSEGTTSTSYKSLANQTRNGSLSYDSLLTPSD. Residues serine 529 and serine 554 each carry the phosphoserine modification. Residues 581–597 show a composition bias toward low complexity; that stretch reads PRTSSSSDDSKRSPLSK. An Omega-N-methylarginine modification is found at arginine 617. Position 621 is a phosphoserine (serine 621). A Phosphothreonine modification is found at threonine 659. The span at 666 to 677 shows a compositional bias: polar residues; the sequence is LKTTYSKSNGQP. Serine 684 and serine 694 each carry phosphoserine. Residue arginine 697 is modified to Omega-N-methylarginine.

The protein belongs to the DHHC palmitoyltransferase family. ERF2/ZDHHC9 subfamily. Post-translationally, autopalmitoylated. Palmitoylation of the C-terminal tail regulates stimulation-dependent plasma membrane motility. Phosphorylation regulates association with endocytic proteins and its subcellular localization. Phosphorylation by LYN during fatty acid uptake leads to inactivation of the activity.

It is found in the cell membrane. The catalysed reaction is L-cysteinyl-[protein] + hexadecanoyl-CoA = S-hexadecanoyl-L-cysteinyl-[protein] + CoA. Its function is as follows. Palmitoyltransferase that catalyzes the addition of palmitate onto various protein substrates such as CTNND2, CD36, GSDMD, NLRP3, NOD1, NOD2, STAT3 and S1PR1 thus plays a role in various biological processes including cell adhesion, inflammation, fatty acid uptake, bacterial sensing or cardiac functions. Plays an important role in the regulation of synapse efficacy by mediating palmitoylation of delta-catenin/CTNND2, thereby increasing synaptic delivery and surface stabilization of alpha-amino-3-hydroxy-5-methyl-4-isoxazole propionic acid receptors (AMPARs). Under basal conditions, remains at the synaptic membrane through FYN-mediated phosphorylation that prevents association with endocytic proteins. Neuronal activity enhances the internalization and trafficking of DHHC5 from spines to dendritic shafts where it palmitoylates delta-catenin/CTNND2. Regulates cell adhesion at the plasma membrane by palmitoylating GOLGA7B and DSG2. Plays a role in innate immune response by mediating the palmitoylation of NOD1 and NOD2 and their proper recruitment to the bacterial entry site and phagosomes. Also participates in fatty acid uptake by palmitoylating CD36 and thereby targeting it to the plasma membrane. Upon binding of fatty acids to CD36, gets phosphorylated by LYN leading to inactivation and subsequent CD36 caveolar endocytosis. Controls oligodendrocyte development by catalyzing STAT3 palmitoylation. Acts as a regulator of inflammatory response by mediating palmitoylation of NLRP3 and GSDMD. Palmitoylates NLRP3 to promote inflammasome assembly and activation. Activates pyroptosis by catalyzing palmitoylation of gasdermin-D (GSDMD), thereby promoting membrane translocation and pore formation of GSDMD. This chain is Palmitoyltransferase ZDHHC5 (Zdhhc5), found in Rattus norvegicus (Rat).